The chain runs to 201 residues: Glycerol-3-phosphate acyltransferase (201 aa).

Transmembrane regions (helical) follow at residues 10 to 30, 60 to 80, 86 to 106, 116 to 136, 139 to 159, and 166 to 186; these read MLIGALIFGYVLGSIPFGLIL, LAAATLILDALKGTAAALIAA, AAIAAGFGAFIGHLFPVWIGF, LGVLIGLAWAGALVFAAAWIV, LLTRYSSLSALVASLVVPIAL, and ALAALFAIMTVIVFIKHRANI.

It belongs to the PlsY family. Probably interacts with PlsX.

It localises to the cell inner membrane. The catalysed reaction is an acyl phosphate + sn-glycerol 3-phosphate = a 1-acyl-sn-glycero-3-phosphate + phosphate. The protein operates within lipid metabolism; phospholipid metabolism. In terms of biological role, catalyzes the transfer of an acyl group from acyl-phosphate (acyl-PO(4)) to glycerol-3-phosphate (G3P) to form lysophosphatidic acid (LPA). This enzyme utilizes acyl-phosphate as fatty acyl donor, but not acyl-CoA or acyl-ACP. The chain is Glycerol-3-phosphate acyltransferase from Brucella suis (strain ATCC 23445 / NCTC 10510).